The following is a 116-amino-acid chain: Protein SPIRAL1-like 1 (116 aa).

A compositionally biased stretch (gly residues) spans 1-12 (MSRGGSAGGGQS). The interval 1-116 (MSRGGSAGGG…SSLGYLFGGN (116 aa)) is disordered. A compositionally biased stretch (pro residues) spans 27–43 (AAKPAPAAAPAPAPAPA). Residues 44–60 (PAAAVAAPAEKPSPAKA) show a composition bias toward low complexity. Residues 72–90 (GSRSNNNYHRADGQNTGNF) show a composition bias toward polar residues. Gly residues predominate over residues 103–116 (PGGGSSLGYLFGGN).

The protein belongs to the SPIRAL1 family.

In terms of biological role, acts in maintaining the cortical microtubules organization essential for anisotropic cell growth. This chain is Protein SPIRAL1-like 1, found in Oryza sativa subsp. japonica (Rice).